The chain runs to 83 residues: Mu-theraphotoxin-Hhn2j 4 (83 aa).

The N-terminal stretch at 1-21 (MKASMFLALAGSVLLFVVGYA) is a signal peptide. Positions 22 to 48 (SESEEKEFPIELLSKIFAVDVFKGEER) are excised as a propeptide. Intrachain disulfides connect C50-C65, C57-C70, and C64-C77. L81 carries the post-translational modification Leucine amide.

Belongs to the neurotoxin 10 (Hwtx-1) family. 15 (Hntx-3) subfamily. As to quaternary structure, monomer. As to expression, expressed by the venom gland.

The protein localises to the secreted. Functionally, lethal neurotoxin. Selectively blocks tetrodotoxin-sensitive voltage-gated sodium channels (Nav). Does not affect tetrodotoxin-resistant voltage-gated sodium channels or calcium channels. The protein is Mu-theraphotoxin-Hhn2j 4 of Cyriopagopus hainanus (Chinese bird spider).